Reading from the N-terminus, the 356-residue chain is UDP-N-acetylglucosamine--N-acetylmuramyl-(pentapeptide) pyrophosphoryl-undecaprenol N-acetylglucosamine transferase (356 aa).

UDP-N-acetyl-alpha-D-glucosamine contacts are provided by residues 14–16 (TGG), asparagine 126, arginine 162, serine 190, isoleucine 244, and glutamine 289.

The protein belongs to the glycosyltransferase 28 family. MurG subfamily.

It localises to the cell inner membrane. It catalyses the reaction di-trans,octa-cis-undecaprenyl diphospho-N-acetyl-alpha-D-muramoyl-L-alanyl-D-glutamyl-meso-2,6-diaminopimeloyl-D-alanyl-D-alanine + UDP-N-acetyl-alpha-D-glucosamine = di-trans,octa-cis-undecaprenyl diphospho-[N-acetyl-alpha-D-glucosaminyl-(1-&gt;4)]-N-acetyl-alpha-D-muramoyl-L-alanyl-D-glutamyl-meso-2,6-diaminopimeloyl-D-alanyl-D-alanine + UDP + H(+). The protein operates within cell wall biogenesis; peptidoglycan biosynthesis. Cell wall formation. Catalyzes the transfer of a GlcNAc subunit on undecaprenyl-pyrophosphoryl-MurNAc-pentapeptide (lipid intermediate I) to form undecaprenyl-pyrophosphoryl-MurNAc-(pentapeptide)GlcNAc (lipid intermediate II). The chain is UDP-N-acetylglucosamine--N-acetylmuramyl-(pentapeptide) pyrophosphoryl-undecaprenol N-acetylglucosamine transferase from Cupriavidus necator (strain ATCC 17699 / DSM 428 / KCTC 22496 / NCIMB 10442 / H16 / Stanier 337) (Ralstonia eutropha).